The following is a 568-amino-acid chain: Putative U-box domain-containing protein 55 (568 aa).

Residues 217 to 464 (QSESDRNDQL…KVAAEKDAAS (248 aa)) are a coiled coil. Residues 496 to 568 (QPPSYFICPI…AIQEWLQRNS (73 aa)) enclose the U-box domain.

The catalysed reaction is S-ubiquitinyl-[E2 ubiquitin-conjugating enzyme]-L-cysteine + [acceptor protein]-L-lysine = [E2 ubiquitin-conjugating enzyme]-L-cysteine + N(6)-ubiquitinyl-[acceptor protein]-L-lysine.. Its pathway is protein modification; protein ubiquitination. In terms of biological role, functions as an E3 ubiquitin ligase. This is Putative U-box domain-containing protein 55 (PUB55) from Arabidopsis thaliana (Mouse-ear cress).